A 476-amino-acid polypeptide reads, in one-letter code: Nyctalopin (476 aa).

The first 18 residues, 1 to 18 (MLILLLHAVVFSLPYTRA), serve as a signal peptide directing secretion. The LRRNT domain occupies 19 to 57 (TEACLRACPAACTCSHVERGCSVRCDRAGLQRVPQEFPC). 11 LRR repeats span residues 58 to 79 (EAASIDLDRNGLRILGERAFGT), 82 to 103 (SLRRLSLRHNNLSFITPGAFKG), 106 to 128 (RLAELRLAHNGELRYLHVRTFAA), 131 to 154 (RLRRLDLAACRLFSVPERLLAELP), 155 to 177 (ALRELTAFDNLFRRVPGALRGLA), 178 to 199 (NLTHAHFERSRIEAVASGSLLG), 202 to 223 (RLRSLSLQANRVRAVHAGAFGD), 226 to 247 (ALEDLLLNDNLLATLPAAAFRG), 250 to 271 (RLRTLNLGGNALGSVARAWFSD), 274 to 295 (ELELLYLDRNSITFVEEGAFQN), and 298 to 319 (GLLALHLNGNRLTVLSWAAFQP). Asn-92 carries N-linked (GlcNAc...) asparagine glycosylation. Asn-178 carries N-linked (GlcNAc...) asparagine glycosylation. N-linked (GlcNAc...) asparagine glycosylation is present at Asn-295. One can recognise an LRRCT domain in the interval 331–383 (NPWRCDCQLEWLRDWMEGSGRVADVACASPGSVAGQDLSQVVFERSSDGLCVD). N-linked (GlcNAc...) asparagine glycans are attached at residues Asn-388, Asn-427, Asn-434, and Asn-438.

This sequence belongs to the small leucine-rich proteoglycan (SLRP) family. SLRP class IV subfamily. As to expression, expressed abundantly in retina with lower levels in brain, lung, spleen and testis. Not detected in kidney, heart or liver. In the retina, highest expression found in the inner nuclear layer and ganglion cell layer.

It localises to the secreted. Its subcellular location is the extracellular space. The protein resides in the extracellular matrix. This chain is Nyctalopin (Nyx), found in Mus musculus (Mouse).